We begin with the raw amino-acid sequence, 252 residues long: Movement protein (252 aa).

Positions 222 to 252 (YDGPYRPATTRPKSLLSSEDVKRASNKKNSS) are disordered.

This sequence belongs to the tobamovirus movement protein family.

In terms of biological role, transports viral genome to neighboring plant cells directly through plasmosdesmata, without any budding. The movement protein allows efficient cell to cell propagation, by bypassing the host cell wall barrier. Displays RNA-binding activity. This Bidens pilosa (Hairy beggarticks) protein is Movement protein.